We begin with the raw amino-acid sequence, 599 residues long: NTPase KAP family P-loop domain-containing protein 1 (599 aa).

The 416-residue stretch at 1 to 416 folds into the KAP NTPase domain; it reads MQQEAAQRES…NTVPITVRLL (416 aa). 3 helical membrane passes run 25 to 45, 119 to 139, and 156 to 176; these read GWGV…ITEL, VCLA…LLYL, and ALGG…VYSV. Residues 543–599 form a disordered region; sequence ALKPPSPPKSPSQDGPQASPRAIIAAGTSHAGQGSGHSKEAHQTRDRTHGGKPRPMA. Positions 579–591 are enriched in basic and acidic residues; that stretch reads HSKEAHQTRDRTH.

It localises to the membrane. The polypeptide is NTPase KAP family P-loop domain-containing protein 1 (Nkpd1) (Mus musculus (Mouse)).